We begin with the raw amino-acid sequence, 637 residues long: ATP-dependent zinc metalloprotease FtsH (637 aa).

At 1–6 (MNNQGR) the chain is on the cytoplasmic side. Residues 7 to 27 (SILAWAALFIFVILLFNVFQS) form a helical membrane-spanning segment. The Periplasmic portion of the chain corresponds to 28-103 (DGLLGVRNNI…VVPLETRMNT (76 aa)). A helical membrane pass occupies residues 104–124 (FLGFLISWFPMLLLIGVWVFF). The Cytoplasmic portion of the chain corresponds to 125–637 (MRQMHGGGKA…TKDKKENIIS (513 aa)). 195 to 202 (GPPGTGKT) contributes to the ATP binding site. Position 417 (His417) interacts with Zn(2+). Residue Glu418 is part of the active site. 2 residues coordinate Zn(2+): His421 and Asp495.

This sequence in the central section; belongs to the AAA ATPase family. In the C-terminal section; belongs to the peptidase M41 family. Homohexamer. The cofactor is Zn(2+).

The protein localises to the cell inner membrane. Its function is as follows. Acts as a processive, ATP-dependent zinc metallopeptidase for both cytoplasmic and membrane proteins. Plays a role in the quality control of integral membrane proteins. The polypeptide is ATP-dependent zinc metalloprotease FtsH (Rickettsia prowazekii (strain Madrid E)).